The following is a 345-amino-acid chain: NADH-quinone oxidoreductase subunit H (345 aa).

Helical transmembrane passes span A9–A29, V82–V102, V108–G128, M154–V174, L183–F203, Y241–V261, L282–V302, and I325–L345.

This sequence belongs to the complex I subunit 1 family. As to quaternary structure, NDH-1 is composed of 14 different subunits. Subunits NuoA, H, J, K, L, M, N constitute the membrane sector of the complex.

It is found in the cell inner membrane. The enzyme catalyses a quinone + NADH + 5 H(+)(in) = a quinol + NAD(+) + 4 H(+)(out). Its function is as follows. NDH-1 shuttles electrons from NADH, via FMN and iron-sulfur (Fe-S) centers, to quinones in the respiratory chain. The immediate electron acceptor for the enzyme in this species is believed to be ubiquinone. Couples the redox reaction to proton translocation (for every two electrons transferred, four hydrogen ions are translocated across the cytoplasmic membrane), and thus conserves the redox energy in a proton gradient. This subunit may bind ubiquinone. In Salinibacter ruber (strain DSM 13855 / M31), this protein is NADH-quinone oxidoreductase subunit H.